A 350-amino-acid polypeptide reads, in one-letter code: MRVSDFDFDLPEELIALRPARPRDSARMLVIGPAENALADKSVSDLPSHLREGDILVFNDTKVIPARLFGTRRRGEASARIEVMLHKRESADEWRAFLRPAKKLNLSETIDFPGGLSAAVEEKGEGGEAGLRFSLSGPALDAAIAAAGEMPLPPYIARKRAADDEDVADYQTLHADEPGAVAAPTAGLHFTPALMAAIEARGVSTVRLTLHVGAGTFLPVTAEDTDTHKMHAERGEITEAEAAAINEARAKGGRIVAVGTTSLRLLESAVDEAGTVHPFRGETDIFITPGYRFRAVDVLMTNFHLPRSTLFMLVSALRSTEEMKRAYAHAVAEKYRFYSYGDACLIYGAS.

It belongs to the QueA family. As to quaternary structure, monomer.

The protein localises to the cytoplasm. It catalyses the reaction 7-aminomethyl-7-carbaguanosine(34) in tRNA + S-adenosyl-L-methionine = epoxyqueuosine(34) in tRNA + adenine + L-methionine + 2 H(+). Its pathway is tRNA modification; tRNA-queuosine biosynthesis. In terms of biological role, transfers and isomerizes the ribose moiety from AdoMet to the 7-aminomethyl group of 7-deazaguanine (preQ1-tRNA) to give epoxyqueuosine (oQ-tRNA). The sequence is that of S-adenosylmethionine:tRNA ribosyltransferase-isomerase from Parvibaculum lavamentivorans (strain DS-1 / DSM 13023 / NCIMB 13966).